The chain runs to 93 residues: Putative pterin-4-alpha-carbinolamine dehydratase (93 aa).

Belongs to the pterin-4-alpha-carbinolamine dehydratase family.

The enzyme catalyses (4aS,6R)-4a-hydroxy-L-erythro-5,6,7,8-tetrahydrobiopterin = (6R)-L-erythro-6,7-dihydrobiopterin + H2O. The chain is Putative pterin-4-alpha-carbinolamine dehydratase from Trichormus variabilis (strain ATCC 29413 / PCC 7937) (Anabaena variabilis).